Reading from the N-terminus, the 182-residue chain is Ribosome-recycling factor (182 aa).

The protein belongs to the RRF family.

The protein localises to the cytoplasm. Its function is as follows. Responsible for the release of ribosomes from messenger RNA at the termination of protein biosynthesis. May increase the efficiency of translation by recycling ribosomes from one round of translation to another. This chain is Ribosome-recycling factor, found in Synechococcus sp. (strain CC9605).